The chain runs to 276 residues: Hydroxyethylthiazole kinase (276 aa).

M48 serves as a coordination point for substrate. Positions 124 and 175 each coordinate ATP. A substrate-binding site is contributed by G202.

It belongs to the Thz kinase family. The cofactor is Mg(2+).

The catalysed reaction is 5-(2-hydroxyethyl)-4-methylthiazole + ATP = 4-methyl-5-(2-phosphooxyethyl)-thiazole + ADP + H(+). It functions in the pathway cofactor biosynthesis; thiamine diphosphate biosynthesis; 4-methyl-5-(2-phosphoethyl)-thiazole from 5-(2-hydroxyethyl)-4-methylthiazole: step 1/1. In terms of biological role, catalyzes the phosphorylation of the hydroxyl group of 4-methyl-5-beta-hydroxyethylthiazole (THZ). This chain is Hydroxyethylthiazole kinase, found in Clostridium beijerinckii (strain ATCC 51743 / NCIMB 8052) (Clostridium acetobutylicum).